The sequence spans 355 residues: Protein RecA (355 aa).

Residue 67–74 (GPESSGKT) coordinates ATP. The tract at residues 335–355 (NSLVSDVESEDEGASESNEEF) is disordered. The span at 341–355 (VESEDEGASESNEEF) shows a compositional bias: acidic residues.

This sequence belongs to the RecA family.

The protein resides in the cytoplasm. In terms of biological role, can catalyze the hydrolysis of ATP in the presence of single-stranded DNA, the ATP-dependent uptake of single-stranded DNA by duplex DNA, and the ATP-dependent hybridization of homologous single-stranded DNAs. It interacts with LexA causing its activation and leading to its autocatalytic cleavage. This is Protein RecA from Sodalis glossinidius.